A 93-amino-acid chain; its full sequence is Protein S100-A5 (93 aa).

EF-hand domains lie at 12 to 47 (MVTT…LAEK) and 48 to 83 (MKES…LCMA). 7 residues coordinate Ca(2+): threonine 28, glutamate 33, aspartate 61, asparagine 63, aspartate 65, glutamate 67, and glutamate 72.

Belongs to the S-100 family. As to quaternary structure, homodimer.

Its function is as follows. Binds calcium, zinc and copper. One subunit can simultaneously bind 2 calcium ions or 2 copper ions plus 1 zinc ion. Calcium and copper ions compete for the same binding sites. The sequence is that of Protein S100-A5 (S100a5) from Mus musculus (Mouse).